We begin with the raw amino-acid sequence, 115 residues long: U31-theraphotoxin-Cg1a (115 aa).

Positions 1-18 (MKLCVIIIASLMVASVSG) are cleaved as a signal peptide. The propeptide occupies 19–51 (RLRKIKGTELDKKMLLEKLGHGMDIRFEETPRA). Intrachain disulfides connect cysteine 52–cysteine 67, cysteine 60–cysteine 73, cysteine 64–cysteine 113, and cysteine 66–cysteine 86.

It belongs to the neurotoxin 03 (Tx2) family. 02 subfamily. As to expression, expressed by the venom gland.

The protein resides in the secreted. In terms of biological role, probable ion channel inhibitor. This chain is U31-theraphotoxin-Cg1a, found in Chilobrachys guangxiensis (Chinese earth tiger tarantula).